A 141-amino-acid polypeptide reads, in one-letter code: HTH-type transcriptional regulator MntR (141 aa).

Positions 1–63 (MPTPSMEDYI…YEKYRGLVLT (63 aa)) constitute an HTH dtxR-type domain. Residues D8, E11, H77, E99, E102, and H103 each contribute to the Mn(2+) site.

This sequence belongs to the DtxR/MntR family. In terms of assembly, homodimer.

The protein localises to the cytoplasm. Its activity is regulated as follows. DNA binding is strongly activated by Mn(2+). Central regulator of manganese homeostasis. This is HTH-type transcriptional regulator MntR from Geobacillus kaustophilus (strain HTA426).